Consider the following 827-residue polypeptide: Glycerol-3-phosphate acyltransferase (827 aa).

Residues C325 to M330 carry the HXXXXD motif motif.

The protein belongs to the GPAT/DAPAT family.

It is found in the cell inner membrane. The catalysed reaction is sn-glycerol 3-phosphate + an acyl-CoA = a 1-acyl-sn-glycero-3-phosphate + CoA. It functions in the pathway phospholipid metabolism; CDP-diacylglycerol biosynthesis; CDP-diacylglycerol from sn-glycerol 3-phosphate: step 1/3. In Shigella dysenteriae serotype 1 (strain Sd197), this protein is Glycerol-3-phosphate acyltransferase.